Reading from the N-terminus, the 308-residue chain is Methionyl-tRNA formyltransferase (308 aa).

Position 110–113 (110–113) interacts with (6S)-5,6,7,8-tetrahydrofolate; sequence SLLP.

The protein belongs to the Fmt family.

The enzyme catalyses L-methionyl-tRNA(fMet) + (6R)-10-formyltetrahydrofolate = N-formyl-L-methionyl-tRNA(fMet) + (6S)-5,6,7,8-tetrahydrofolate + H(+). In terms of biological role, attaches a formyl group to the free amino group of methionyl-tRNA(fMet). The formyl group appears to play a dual role in the initiator identity of N-formylmethionyl-tRNA by promoting its recognition by IF2 and preventing the misappropriation of this tRNA by the elongation apparatus. This chain is Methionyl-tRNA formyltransferase, found in Neisseria meningitidis serogroup B (strain ATCC BAA-335 / MC58).